Consider the following 25-residue polypeptide: Large ribosomal subunit protein uL30 (25 aa).

Belongs to the universal ribosomal protein uL30 family. Part of the 50S ribosomal subunit.

The sequence is that of Large ribosomal subunit protein uL30 (rpmD) from Pseudomonas fluorescens biotype A.